Reading from the N-terminus, the 351-residue chain is Phenoloxidase-activating factor 3 (351 aa).

An N-terminal signal peptide occupies residues 1–19 (MWLSLVILGVASAIVNVST). A glycan (N-linked (GlcNAc...) asparagine) is linked at asparagine 16. Residues 22-73 (SCTTPNGETATCLPIESCKIFWDYVVTSGADPEINSFLRASLCRQGNYVVCC) enclose the Clip domain. Intrachain disulfides connect cysteine 23–cysteine 72, cysteine 33–cysteine 64, cysteine 39–cysteine 73, cysteine 89–cysteine 224, cysteine 127–cysteine 143, cysteine 167–cysteine 176, cysteine 268–cysteine 285, and cysteine 295–cysteine 326. One can recognise a Peptidase S1 domain in the interval 97-350 (VLGGEDTDLG…HLDWIKQNVR (254 aa)). The active-site Charge relay system is the histidine 142. The Ca(2+) site is built by glutamate 158, aspartate 160, alanine 163, and aspartate 166. Aspartate 204 serves as the catalytic Charge relay system. Serine 299 functions as the Charge relay system in the catalytic mechanism.

Belongs to the peptidase S1 family. CLIP subfamily. In terms of assembly, in the active form, heterodimer of a light chain and a heavy chain; disulfide-linked. In terms of processing, proteolytically cleaved.

The protein localises to the secreted. Its activity is regulated as follows. Cleavage of PPAF2 is Ca(2+)-independent. Inhibited by heparin. Functionally, serine endopeptidase which, by cleaving prophenoloxidase activating factor PPAF2, is required for the activation of the prophenoloxidase cascade probably following the recognition of pathogen-derived products. In Holotrichia diomphalia (Korean black chafer), this protein is Phenoloxidase-activating factor 3.